The following is a 517-amino-acid chain: General transcription factor IIF subunit 1 (517 aa).

Ala2 is subject to N-acetylalanine. Thr156 is subject to Phosphothreonine. Positions 178–458 are disordered; it reads QQRRLKDQDQ…SGDVQVTEDA (281 aa). The span at 210-225 shows a compositional bias: acidic residues; that stretch reads LEDDLEMSSDDSEASG. Residues Ser217, Ser218, Ser221, and Ser224 each carry the phosphoserine modification. The span at 232-251 shows a compositional bias: basic residues; the sequence is PKAKKKAPPSKGGRKKKKKK. 2 stretches are compositionally biased toward acidic residues: residues 255-270 and 303-325; these read DEAF…EGQE and EQSE…EEEE. Thr331 carries the phosphothreonine modification. The span at 343-355 shows a compositional bias: acidic residues; the sequence is EESDSSEESDIDS. Over residues 364–374 the composition is skewed to basic residues; sequence AKKKTPPKRER. Phosphoserine is present on residues Ser377, Ser380, Ser381, and Ser385. Residues 377–391 are compositionally biased toward low complexity; the sequence is SGGSSRGNSRPGTPS. Thr389 is modified (phosphothreonine). A Phosphoserine modification is found at Ser391. The span at 392–401 shows a compositional bias: polar residues; sequence TEAGSTSSTL. Residue Lys407 is modified to N6-acetyllysine. Residues 428-452 show a composition bias toward polar residues; the sequence is GPQSLSGKSTPQPQSGKSTPSSGDV. Phosphoserine is present on residues Ser431, Ser433, and Ser436. Thr437 and Thr446 each carry phosphothreonine. At Ser449 the chain carries Phosphoserine.

The protein belongs to the TFIIF alpha subunit family. As to quaternary structure, heterodimer of an alpha and a beta subunit. Interacts with GTF2F2, CTDP1, TAF6/TAFII80 and URI1. Interacts with GTF2B (via C-terminus and preferentially via acetylated form); this interaction prevents binding of GTF2B to GTF2F2. Part of TBP-based Pol II pre-initiation complex (PIC), in which Pol II core assembles with general transcription factors and other specific initiation factors including GTF2E1, GTF2E2, GTF2F1, GTF2F2, TCEA1, ERCC2, ERCC3, GTF2H2, GTF2H3, GTF2H4, GTF2H5, GTF2A1, GTF2A2, GTF2B and TBP; this large multi-subunit PIC complex mediates DNA unwinding and targets Pol II core to the transcription start site where the first phosphodiester bond forms. In terms of processing, phosphorylated on Ser and other residues by TAF1 and casein kinase II-like kinases.

It localises to the nucleus. Its function is as follows. TFIIF is a general transcription initiation factor that binds to RNA polymerase II and helps to recruit it to the initiation complex in collaboration with TFIIB. It promotes transcription elongation. The protein is General transcription factor IIF subunit 1 (GTF2F1) of Bos taurus (Bovine).